The sequence spans 462 residues: uncharacterized protein (462 aa).

A run of 2 helical transmembrane segments spans residues 381–401 (WILGSMILFTILASILRFKGM) and 433–453 (LWILEPIIRVTSLILLGNLYI).

The protein resides in the cell membrane. This is an uncharacterized protein from Methanocaldococcus jannaschii (strain ATCC 43067 / DSM 2661 / JAL-1 / JCM 10045 / NBRC 100440) (Methanococcus jannaschii).